Reading from the N-terminus, the 388-residue chain is 2-methylene-furan-3-one reductase (388 aa).

Residues 1–60 (MEALLSSTTLQLKPLHPPSSFSSLHSPFSSISVLRVKGSKKAETFIQRSNFSTVLPLRVS) constitute a chloroplast transit peptide. NADP(+)-binding positions include lysine 125, 240 to 241 (GV), 263 to 266 (STGK), tyrosine 281, 330 to 332 (FVV), and 377 to 378 (RA). Lysine 125 is a substrate binding site.

This sequence belongs to the zinc-containing alcohol dehydrogenase family. Quinone oxidoreductase subfamily. As to quaternary structure, monomer.

It localises to the plastid. The protein localises to the chloroplast. It catalyses the reaction 4-hydroxy-2,5-dimethyl-furan-3(2H)-one + NADP(+) = 4-hydroxy-5-methyl-2-methylenefuran-3(2H)-one + NADPH + H(+). In terms of biological role, enone oxidoreductase involved in the biosynthesis of 4-hydroxy-2,5-dimethyl-3(2H)-furanone (HDMF or furaneol). Can use both NADH and NADPH as the electron donor. The chain is 2-methylene-furan-3-one reductase (EO) from Solanum lycopersicum (Tomato).